The primary structure comprises 356 residues: Replication factor C subunit 3 (356 aa).

Position 20 is an N6-acetyllysine (lysine 20). The residue at position 125 (serine 125) is a Phosphoserine.

Belongs to the activator 1 small subunits family. Subunit of the RFC complex, an heteropentameric complex consisting of a large subunit RFC1 and four small subunits RFC2, RFC3, RFC4 and RFC5; the RFC complex interacts with PCNA. Forms an heterotetrameric complex with RFC2, RFC4 and RFC5; this complex has ATPase activity but is not stimulated by PCNA. The heterotetramer of subunits RFC2, RFC3, RFC4 and RFC5 interacts with RAD17. Interacts with CNTD1; this interaction facilitates crossover formation.

The protein resides in the nucleus. Subunit of the replication factor C (RFC) complex which acts during elongation of primed DNA templates by DNA polymerases delta and epsilon, and is necessary for ATP-dependent loading of proliferating cell nuclear antigen (PCNA) onto primed DNA. The sequence is that of Replication factor C subunit 3 (Rfc3) from Mus musculus (Mouse).